Consider the following 135-residue polypeptide: Large ribosomal subunit protein eL32 (135 aa).

The protein belongs to the eukaryotic ribosomal protein eL32 family.

The protein is Large ribosomal subunit protein eL32 of Methanococcus maripaludis (strain C5 / ATCC BAA-1333).